Consider the following 303-residue polypeptide: Probable serine acetyltransferase 1 (303 aa).

Disordered regions lie at residues 1 to 36 (MTAGQPLRDDPQPRRHSPPALHPAVVPAYPPPESDA) and 271 to 290 (NPARLLGGKKGDDMPGESMD).

Belongs to the transferase hexapeptide repeat family. As to quaternary structure, homomultimer.

It carries out the reaction L-serine + acetyl-CoA = O-acetyl-L-serine + CoA. It functions in the pathway amino-acid biosynthesis; L-cysteine biosynthesis; L-cysteine from L-serine: step 1/2. The polypeptide is Probable serine acetyltransferase 1 (SAT1) (Oryza sativa subsp. japonica (Rice)).